Consider the following 296-residue polypeptide: Glycine--tRNA ligase alpha subunit (296 aa).

It belongs to the class-II aminoacyl-tRNA synthetase family. As to quaternary structure, tetramer of two alpha and two beta subunits.

Its subcellular location is the cytoplasm. It carries out the reaction tRNA(Gly) + glycine + ATP = glycyl-tRNA(Gly) + AMP + diphosphate. The chain is Glycine--tRNA ligase alpha subunit from Maricaulis maris (strain MCS10) (Caulobacter maris).